The chain runs to 402 residues: Phosphopentomutase (402 aa).

Residues Asp10, Asp301, His306, Asp342, His343, and His354 each contribute to the Mn(2+) site.

The protein belongs to the phosphopentomutase family. Mn(2+) serves as cofactor.

Its subcellular location is the cytoplasm. It catalyses the reaction 2-deoxy-alpha-D-ribose 1-phosphate = 2-deoxy-D-ribose 5-phosphate. It carries out the reaction alpha-D-ribose 1-phosphate = D-ribose 5-phosphate. The protein operates within carbohydrate degradation; 2-deoxy-D-ribose 1-phosphate degradation; D-glyceraldehyde 3-phosphate and acetaldehyde from 2-deoxy-alpha-D-ribose 1-phosphate: step 1/2. In terms of biological role, isomerase that catalyzes the conversion of deoxy-ribose 1-phosphate (dRib-1-P) and ribose 1-phosphate (Rib-1-P) to deoxy-ribose 5-phosphate (dRib-5-P) and ribose 5-phosphate (Rib-5-P), respectively. The chain is Phosphopentomutase from Aeromonas salmonicida (strain A449).